The chain runs to 552 residues: Carboxypeptidase Y homolog A (552 aa).

Residues 1–17 (MRVLPATLLVGAATAAT) form the signal peptide. A propeptide spanning residues 18–133 (PAQQVLGGLQ…KLEAYDLRIK (116 aa)) is cleaved from the precursor. 5 disulfides stabilise this stretch: Cys-188/Cys-428, Cys-322/Cys-336, Cys-346/Cys-369, Cys-353/Cys-362, and Cys-391/Cys-398. Asn-219 carries an N-linked (GlcNAc...) asparagine glycan. Ser-275 is an active-site residue. Asp-467 is an active-site residue. Asn-518 is a glycosylation site (N-linked (GlcNAc...) asparagine). His-529 is an active-site residue.

This sequence belongs to the peptidase S10 family.

Its subcellular location is the vacuole. It catalyses the reaction Release of a C-terminal amino acid with broad specificity.. Its function is as follows. Vacuolar carboxypeptidase involved in degradation of small peptides. Digests preferentially peptides containing an aliphatic or hydrophobic residue in P1' position, as well as methionine, leucine or phenylalanine in P1 position of ester substrate. This Emericella nidulans (strain FGSC A4 / ATCC 38163 / CBS 112.46 / NRRL 194 / M139) (Aspergillus nidulans) protein is Carboxypeptidase Y homolog A (cpyA).